Here is a 1508-residue protein sequence, read N- to C-terminus: Ras guanine nucleotide exchange factor Y (1508 aa).

8 disordered regions span residues 1 to 73 (MIII…NNNE), 128 to 182 (KVLS…PKSV), 197 to 272 (IDNN…YSTS), 396 to 517 (ILQC…EDED), 565 to 593 (LSEN…SIPT), 606 to 727 (LPNI…AEPS), 831 to 1021 (NVII…SNKE), and 1153 to 1172 (TNED…TNKN). Low complexity-rich tracts occupy residues 9-22 (NINN…NNNS) and 33-72 (NNNN…NNNN). Composition is skewed to polar residues over residues 128–150 (KVLS…TNTI) and 172–182 (DRTSQDIPKSV). A compositionally biased stretch (low complexity) spans 199-216 (NNTTNNNSNNNNNSSLST). Residues 223 to 232 (DSLETNPIKD) are compositionally biased toward basic and acidic residues. Residues 233 to 250 (EESEESEESEESKEEEEE) show a composition bias toward acidic residues. Residues 255–272 (IKTTKTTSETIESSYSTS) are compositionally biased toward low complexity. Over residues 399 to 409 (CKDDSSSKDQD) the composition is skewed to basic and acidic residues. The segment covering 413–447 (NNSAGSSGNSSASNSNRNSIAFSSSNHFSSESSQS) has biased composition (low complexity). Residues 465–475 (PQSPSPSPSPP) are compositionally biased toward pro residues. Polar residues predominate over residues 492 to 510 (FNQQTNFSVSPTKSPSNEK). Low complexity-rich tracts occupy residues 574–593 (NQPS…SIPT), 606–660 (LPNI…LTES), 668–687 (NNNN…NNNN), 831–855 (NVII…NTVK), 862–891 (NKSS…SLTP), 942–984 (SLWS…SPPT), 993–1019 (ITTG…NNSN), and 1160–1172 (SNSN…TNKN). Residues 659–686 (ESLKTRIEENNNNNNNKNINNNNNNNNN) are a coiled coil. The N-terminal Ras-GEF domain maps to 1074-1234 (NRIKVRSASL…IILKIIDRKA (161 aa)). The Ras-GEF domain occupies 1278 to 1508 (DDLEIARQLT…LYKQSKIIEP (231 aa)).

Its function is as follows. Promotes the exchange of Ras-bound GDP by GTP. The protein is Ras guanine nucleotide exchange factor Y (gefY) of Dictyostelium discoideum (Social amoeba).